The primary structure comprises 146 residues: Transcriptional regulator MraZ (146 aa).

SpoVT-AbrB domains are found at residues glutamate 5–aspartate 47 and serine 76–arginine 119.

The protein belongs to the MraZ family. In terms of assembly, forms oligomers.

Its subcellular location is the cytoplasm. The protein resides in the nucleoid. This Dictyoglomus turgidum (strain DSM 6724 / Z-1310) protein is Transcriptional regulator MraZ.